Here is a 127-residue protein sequence, read N- to C-terminus: Fumarate reductase subunit C (127 aa).

The next 3 membrane-spanning stretches (helical) occupy residues A30–V50, I67–F87, and I107–M127.

Belongs to the FrdC family. Part of an enzyme complex containing four subunits: a flavoprotein (FrdA), an iron-sulfur protein (FrdB), and two hydrophobic anchor proteins (FrdC and FrdD).

Its subcellular location is the cell inner membrane. Anchors the catalytic components of the fumarate reductase complex to the cell membrane, binds quinones. The polypeptide is Fumarate reductase subunit C (Vibrio campbellii (strain ATCC BAA-1116)).